A 943-amino-acid polypeptide reads, in one-letter code: uncharacterized protein (943 aa).

Met1 carries the N-acetylmethionine modification. Disordered regions lie at residues 37 to 63 (DETPISRNGNDSNINIQPSSVPQQQQQ), 152 to 177 (KHQFGKSKKNTKGTGGGGDGDDDDEV), 315 to 381 (LPMN…QQLQ), 397 to 472 (QNVP…PLKK), and 515 to 546 (EREALVEEKEKERAEKNTEANEEEEISHESDD). Positions 41 to 58 (ISRNGNDSNINIQPSSVP) are enriched in polar residues. Over residues 152–162 (KHQFGKSKKNT) the composition is skewed to basic residues. Over residues 318 to 358 (NNYNNHPGQFQNTPPVMPSGQQPPQQPRTLSLTNGPRYSPQ) the composition is skewed to polar residues. Low complexity predominate over residues 367–381 (QQISQRQQQQQQQLQ). Polar residues predominate over residues 397–409 (QNVPQGFNPWSPN). The span at 417–433 (SMKQPISQSSISSKNNS) shows a compositional bias: low complexity. Residues 434–470 (AYSIPNVQNNSLTTFSPSSPTDATAMPNSTKQGSSPL) are compositionally biased toward polar residues. The segment covering 515–533 (EREALVEEKEKERAEKNTE) has biased composition (basic and acidic residues). Phosphoserine occurs at positions 553, 586, and 619. The segment at 616–639 (EFPSPGKYNSNSDNGEMNTTNEVD) is disordered. Positions 622 to 639 (KYNSNSDNGEMNTTNEVD) are enriched in polar residues. Ser649 carries the post-translational modification Phosphoserine. The segment at 654-683 (IPERDPKRNVSDATIKRRESDGNGRRLSNV) is disordered. The segment covering 655 to 677 (PERDPKRNVSDATIKRRESDGNG) has biased composition (basic and acidic residues). Residues Ser681, Ser766, and Ser771 each carry the phosphoserine modification.

This is an uncharacterized protein from Saccharomyces cerevisiae (strain ATCC 204508 / S288c) (Baker's yeast).